Reading from the N-terminus, the 589-residue chain is Formate--tetrahydrofolate ligase (589 aa).

Position 74 to 81 (74 to 81) interacts with ATP; sequence TPFGEGKS.

It belongs to the formate--tetrahydrofolate ligase family.

It carries out the reaction (6S)-5,6,7,8-tetrahydrofolate + formate + ATP = (6R)-10-formyltetrahydrofolate + ADP + phosphate. It functions in the pathway one-carbon metabolism; tetrahydrofolate interconversion. This is Formate--tetrahydrofolate ligase from Thermodesulfovibrio yellowstonii (strain ATCC 51303 / DSM 11347 / YP87).